Reading from the N-terminus, the 172-residue chain is Putative phosphoesterase Bcer98_0945 (172 aa).

H34 (proton donor) is an active-site residue. Short sequence motifs (HXTX) lie at residues 34–37 and 115–118; these read HITL and HLTI. H115 serves as the catalytic Proton acceptor.

It belongs to the 2H phosphoesterase superfamily. YjcG family.

This is Putative phosphoesterase Bcer98_0945 from Bacillus cytotoxicus (strain DSM 22905 / CIP 110041 / 391-98 / NVH 391-98).